The chain runs to 317 residues: 4-hydroxy-3-methylbut-2-enyl diphosphate reductase (317 aa).

Cys12 contributes to the [4Fe-4S] cluster binding site. (2E)-4-hydroxy-3-methylbut-2-enyl diphosphate is bound by residues His43 and His81. His43 and His81 together coordinate dimethylallyl diphosphate. His43 and His81 together coordinate isopentenyl diphosphate. Position 103 (Cys103) interacts with [4Fe-4S] cluster. (2E)-4-hydroxy-3-methylbut-2-enyl diphosphate is bound at residue His131. His131 contributes to the dimethylallyl diphosphate binding site. His131 contributes to the isopentenyl diphosphate binding site. Glu133 serves as the catalytic Proton donor. Thr172 serves as a coordination point for (2E)-4-hydroxy-3-methylbut-2-enyl diphosphate. Position 200 (Cys200) interacts with [4Fe-4S] cluster. Residues Ser228, Asn230, and Ser273 each contribute to the (2E)-4-hydroxy-3-methylbut-2-enyl diphosphate site. Dimethylallyl diphosphate contacts are provided by Ser228, Asn230, and Ser273. Isopentenyl diphosphate is bound by residues Ser228, Asn230, and Ser273.

The protein belongs to the IspH family. [4Fe-4S] cluster is required as a cofactor.

It carries out the reaction isopentenyl diphosphate + 2 oxidized [2Fe-2S]-[ferredoxin] + H2O = (2E)-4-hydroxy-3-methylbut-2-enyl diphosphate + 2 reduced [2Fe-2S]-[ferredoxin] + 2 H(+). It catalyses the reaction dimethylallyl diphosphate + 2 oxidized [2Fe-2S]-[ferredoxin] + H2O = (2E)-4-hydroxy-3-methylbut-2-enyl diphosphate + 2 reduced [2Fe-2S]-[ferredoxin] + 2 H(+). Its pathway is isoprenoid biosynthesis; dimethylallyl diphosphate biosynthesis; dimethylallyl diphosphate from (2E)-4-hydroxy-3-methylbutenyl diphosphate: step 1/1. It participates in isoprenoid biosynthesis; isopentenyl diphosphate biosynthesis via DXP pathway; isopentenyl diphosphate from 1-deoxy-D-xylulose 5-phosphate: step 6/6. In terms of biological role, catalyzes the conversion of 1-hydroxy-2-methyl-2-(E)-butenyl 4-diphosphate (HMBPP) into a mixture of isopentenyl diphosphate (IPP) and dimethylallyl diphosphate (DMAPP). Acts in the terminal step of the DOXP/MEP pathway for isoprenoid precursor biosynthesis. In Exiguobacterium sp. (strain ATCC BAA-1283 / AT1b), this protein is 4-hydroxy-3-methylbut-2-enyl diphosphate reductase.